The chain runs to 517 residues: Lysine--tRNA ligase (517 aa).

Positions methionine 1 to alanine 21 are disordered. Over residues alanine 7–proline 20 the composition is skewed to low complexity. The Mg(2+) site is built by glutamate 427 and glutamate 434.

Belongs to the class-II aminoacyl-tRNA synthetase family. As to quaternary structure, homodimer. Requires Mg(2+) as cofactor.

It is found in the cytoplasm. The enzyme catalyses tRNA(Lys) + L-lysine + ATP = L-lysyl-tRNA(Lys) + AMP + diphosphate. This chain is Lysine--tRNA ligase, found in Cupriavidus taiwanensis (strain DSM 17343 / BCRC 17206 / CCUG 44338 / CIP 107171 / LMG 19424 / R1) (Ralstonia taiwanensis (strain LMG 19424)).